The chain runs to 200 residues: Recombination protein RecR (200 aa).

The C4-type zinc finger occupies 57-72 (CDSCQNFSDTEICQIC). The Toprim domain occupies 80 to 175 (GTLCVVESPS…LITRLAHGIP (96 aa)).

This sequence belongs to the RecR family.

Functionally, may play a role in DNA repair. It seems to be involved in an RecBC-independent recombinational process of DNA repair. It may act with RecF and RecO. In Marinobacter nauticus (strain ATCC 700491 / DSM 11845 / VT8) (Marinobacter aquaeolei), this protein is Recombination protein RecR.